Here is a 301-residue protein sequence, read N- to C-terminus: MTALNRAVASARVGTEVIRVRGLTFRYPKAAEPAVRGMEFTVGRGEIFGLLGPSGAGKSTTQKLLIGLLRDHGGQATVWDKEPAEWGPDYYERIGVSFELPNHYQKLTGYENLRFFASLYAGATADPMQLLAAVGLADDAHTLVGKYSKGMQMRLPFARSLINDPELLFLDEPTSGLDPVNARKIKDIIVDLKARGRTIFLTTHDMATADELCDRVAFVVDGRIVALDSPTELKIARSRRRVRVEYRGDGGGLETAEFGMDGLADDPAFHSVLRNHHVETIHSREASLDDVFVEVTGRQLT.

The 229-residue stretch at Ile18–Tyr246 folds into the ABC transporter domain. Gly52–Ser59 contributes to the ATP binding site.

The protein belongs to the ABC transporter superfamily. As to quaternary structure, the complex is composed of 2 ATP-binding proteins (Rv2688c) and 2 transmembrane proteins (Rv2686c and Rv2687c).

The protein resides in the cell membrane. With respect to regulation, inhibited by reserpine and verapamil. Part of the ABC transporter complex Rv2686c/Rv2687c/Rv2688c involved in fluoroquinolones export. Confers resistance to ciprofloxacin and, to a lesser extent, norfloxacin, moxifloxacin and sparfloxacin. Probably responsible for energy coupling to the transport system. The protein is Fluoroquinolones export ATP-binding protein Rv2688c of Mycobacterium tuberculosis (strain ATCC 25618 / H37Rv).